We begin with the raw amino-acid sequence, 423 residues long: T-box protein 2 (423 aa).

A DNA-binding region (T-box) is located at residues 70–243 (LWQQFSQCGT…NNPFAKGFRD (174 aa)). 2 disordered regions span residues 238–324 (AKGF…PLRS) and 384–423 (VEAT…LSKP). Positions 261-283 (DATQSPPGKTASLPTHSPHPSES) are enriched in polar residues. Residues 302–317 (TPTTSSLSTSTTPTLS) are compositionally biased toward low complexity. Positions 394 to 404 (AEKPEVKKEQK) are enriched in basic and acidic residues.

In terms of processing, sumoylated. As to expression, expressed in body wall muscles and a subset of pharyngeal neurons. Expressed in head neurons and occassionally tail neurons. Not expressed in the pharynx.

It localises to the nucleus. In terms of biological role, involved in the transcriptional regulation of genes required for the development of pharyngeal muscles derived from the ABa lineage. Acts as a transcriptional repressor and binds to T-box binding sites in its own promoter to negatively autoregulate its own expression in neurons, seam cells and the gut in order to restrict its expression to certain tissues. May function together with the nfya-1-NF-Y complex to repress its own expression. Plays a role in neural fate specification in the hermaphrodite-specific neuron (HSN)/PHB neuron lineage, acting in concert with homeobox protein egl-5 and the asymmetric cell division protein ham-1. The polypeptide is T-box protein 2 (Caenorhabditis elegans).